The sequence spans 200 residues: Holliday junction branch migration complex subunit RuvA (200 aa).

A domain I region spans residues 1–64 (MFAYFRGKLT…EDLLQLYGFS (64 aa)). The segment at 65 to 143 (GEEERQLFRL…KLSPVSALAS (79 aa)) is domain II. Residues 144–154 (PARLSSTLLRD) form a flexible linker region. Residues 154-200 (DDAVNALVTLGFSRIIVQKAVVAILEQNPGLTVEEVIKAALVSIHNS) are domain III.

It belongs to the RuvA family. In terms of assembly, homotetramer. Forms an RuvA(8)-RuvB(12)-Holliday junction (HJ) complex. HJ DNA is sandwiched between 2 RuvA tetramers; dsDNA enters through RuvA and exits via RuvB. An RuvB hexamer assembles on each DNA strand where it exits the tetramer. Each RuvB hexamer is contacted by two RuvA subunits (via domain III) on 2 adjacent RuvB subunits; this complex drives branch migration. In the full resolvosome a probable DNA-RuvA(4)-RuvB(12)-RuvC(2) complex forms which resolves the HJ.

The protein resides in the cytoplasm. Its function is as follows. The RuvA-RuvB-RuvC complex processes Holliday junction (HJ) DNA during genetic recombination and DNA repair, while the RuvA-RuvB complex plays an important role in the rescue of blocked DNA replication forks via replication fork reversal (RFR). RuvA specifically binds to HJ cruciform DNA, conferring on it an open structure. The RuvB hexamer acts as an ATP-dependent pump, pulling dsDNA into and through the RuvAB complex. HJ branch migration allows RuvC to scan DNA until it finds its consensus sequence, where it cleaves and resolves the cruciform DNA. The protein is Holliday junction branch migration complex subunit RuvA of Pelodictyon phaeoclathratiforme (strain DSM 5477 / BU-1).